The chain runs to 154 residues: Myoglobin (154 aa).

In terms of domain architecture, Globin spans 2-148 (VLSDAEWQLV…FRKDIAAKYK (147 aa)). Ser-4 is subject to Phosphoserine. His-65 is a nitrite binding site. O2 is bound at residue His-65. Residue Thr-68 is modified to Phosphothreonine. His-94 lines the heme b pocket.

This sequence belongs to the globin family. Monomeric.

It is found in the cytoplasm. The protein localises to the sarcoplasm. The catalysed reaction is Fe(III)-heme b-[protein] + nitric oxide + H2O = Fe(II)-heme b-[protein] + nitrite + 2 H(+). The enzyme catalyses H2O2 + AH2 = A + 2 H2O. Monomeric heme protein which primary function is to store oxygen and facilitate its diffusion within muscle tissues. Reversibly binds oxygen through a pentacoordinated heme iron and enables its timely and efficient release as needed during periods of heightened demand. Depending on the oxidative conditions of tissues and cells, and in addition to its ability to bind oxygen, it also has a nitrite reductase activity whereby it regulates the production of bioactive nitric oxide. Under stress conditions, like hypoxia and anoxia, it also protects cells against reactive oxygen species thanks to its pseudoperoxidase activity. This chain is Myoglobin (MB), found in Megaptera novaeangliae (Humpback whale).